Here is a 117-residue protein sequence, read N- to C-terminus: Immunoglobulin heavy variable 1-69 (117 aa).

An N-terminal signal peptide occupies residues 1 to 19 (MDWTWRFLFVVAAATGVQS). Pyrrolidone carboxylic acid is present on Q20. The tract at residues 20-44 (QVQLVQSGAEVKKPGSSVKVSCKAS) is framework-1. Residues 20–117 (QVQLVQSGAE…EDTAVYYCAR (98 aa)) enclose the Ig-like domain. A disulfide bridge connects residues C41 and C115. Positions 45–52 (GGTFSSYA) are complementarity-determining-1. The framework-2 stretch occupies residues 53 to 69 (ISWVRQAPGQGLEWMGG). A complementarity-determining-2 region spans residues 70-77 (IIPIFGTA). Positions 78 to 115 (NYAQKFQGRVTITADKSTSTAYMELSSLRSEDTAVYYC) are framework-3. The tract at residues 116-117 (AR) is complementarity-determining-3.

As to quaternary structure, immunoglobulins are composed of two identical heavy chains and two identical light chains; disulfide-linked.

It is found in the secreted. Its subcellular location is the cell membrane. Functionally, v region of the variable domain of immunoglobulin heavy chains that participates in the antigen recognition. Immunoglobulins, also known as antibodies, are membrane-bound or secreted glycoproteins produced by B lymphocytes. In the recognition phase of humoral immunity, the membrane-bound immunoglobulins serve as receptors which, upon binding of a specific antigen, trigger the clonal expansion and differentiation of B lymphocytes into immunoglobulins-secreting plasma cells. Secreted immunoglobulins mediate the effector phase of humoral immunity, which results in the elimination of bound antigens. The antigen binding site is formed by the variable domain of one heavy chain, together with that of its associated light chain. Thus, each immunoglobulin has two antigen binding sites with remarkable affinity for a particular antigen. The variable domains are assembled by a process called V-(D)-J rearrangement and can then be subjected to somatic hypermutations which, after exposure to antigen and selection, allow affinity maturation for a particular antigen. This chain is Immunoglobulin heavy variable 1-69, found in Homo sapiens (Human).